We begin with the raw amino-acid sequence, 302 residues long: Protein FdhE homolog (302 aa).

It belongs to the FdhE family.

The protein resides in the cytoplasm. Necessary for formate dehydrogenase activity. In Haemophilus influenzae (strain PittEE), this protein is Protein FdhE homolog.